The sequence spans 427 residues: Trigger factor (427 aa).

In terms of domain architecture, PPIase FKBP-type spans 163–248; the sequence is GDTVVIDFVG…IHEVKAKEVP (86 aa).

The protein belongs to the FKBP-type PPIase family. Tig subfamily.

The protein resides in the cytoplasm. It carries out the reaction [protein]-peptidylproline (omega=180) = [protein]-peptidylproline (omega=0). Involved in protein export. Acts as a chaperone by maintaining the newly synthesized protein in an open conformation. Functions as a peptidyl-prolyl cis-trans isomerase. The protein is Trigger factor of Streptococcus pneumoniae (strain 70585).